The primary structure comprises 382 residues: Protein farnesyltransferase subunit beta (382 aa).

PFTB repeat units follow at residues 78–119 (CERA…CLCD), 129–170 (RDRL…SLVG), 178–219 (FEGT…ALLG), 226–268 (EIKL…VIVA), and 286–328 (PEKL…SSIA). (2E,6E)-farnesyl diphosphate is bound by residues 204-207 (HGGY) and 247-250 (RSNK). 2 residues coordinate Zn(2+): D253 and C255. 256–259 (YSWW) contributes to the (2E,6E)-farnesyl diphosphate binding site. H316 contacts Zn(2+).

The protein belongs to the protein prenyltransferase subunit beta family. Heterodimer of an alpha(cwp1) and a beta(cpp1) subunit. Requires Zn(2+) as cofactor.

The catalysed reaction is L-cysteinyl-[protein] + (2E,6E)-farnesyl diphosphate = S-(2E,6E)-farnesyl-L-cysteinyl-[protein] + diphosphate. Catalyzes the transfer of a farnesyl moiety from farnesyl diphosphate to a cysteine at the fourth position from the C-terminus of several proteins. The beta(cpp1) subunit is responsible for peptide-binding. The chain is Protein farnesyltransferase subunit beta (cpp1) from Schizosaccharomyces pombe (strain 972 / ATCC 24843) (Fission yeast).